We begin with the raw amino-acid sequence, 62 residues long: Ribulose bisphosphate carboxylase/oxygenase activase, chloroplastic (62 aa).

It belongs to the RuBisCO activase family.

It is found in the plastid. It localises to the chloroplast stroma. In terms of biological role, activation of RuBisCO (ribulose-1,5-bisphosphate carboxylase/oxygenase; EC 4.1.1.39) involves the ATP-dependent carboxylation of the epsilon-amino group of lysine leading to a carbamate structure. This Vitis sp. (Grape) protein is Ribulose bisphosphate carboxylase/oxygenase activase, chloroplastic.